We begin with the raw amino-acid sequence, 404 residues long: Pectate lyase E (404 aa).

The signal sequence occupies residues 1 to 41 (MNNSRMSSVSTQKTTGRSALGTKSALAAIIATTMMVSVASA). Ca(2+)-binding residues include aspartate 182 and aspartate 225. Arginine 278 is an active-site residue.

The protein belongs to the polysaccharide lyase 1 family. PLBC subfamily. It depends on Ca(2+) as a cofactor.

The protein localises to the secreted. The enzyme catalyses Eliminative cleavage of (1-&gt;4)-alpha-D-galacturonan to give oligosaccharides with 4-deoxy-alpha-D-galact-4-enuronosyl groups at their non-reducing ends.. It participates in glycan metabolism; pectin degradation; 2-dehydro-3-deoxy-D-gluconate from pectin: step 2/5. In terms of biological role, involved in maceration and soft-rotting of plant tissue. Pectate lyases have been implicated as pathogenicity factors which induce maceration or rotting of plant tissue. PelE is sufficient to induce these effects under laboratory conditions. In Dickeya chrysanthemi (Pectobacterium chrysanthemi), this protein is Pectate lyase E (pelE).